A 131-amino-acid polypeptide reads, in one-letter code: Small ribosomal subunit protein uS8c (131 aa).

Belongs to the universal ribosomal protein uS8 family. Part of the 30S ribosomal subunit.

The protein localises to the plastid. Its subcellular location is the chloroplast. Functionally, one of the primary rRNA binding proteins, it binds directly to 16S rRNA central domain where it helps coordinate assembly of the platform of the 30S subunit. The protein is Small ribosomal subunit protein uS8c (rps8) of Tupiella akineta (Green alga).